A 424-amino-acid polypeptide reads, in one-letter code: UPF0053 protein MG146 homolog (424 aa).

A CNNM transmembrane domain is found at 6–191 (SGGLLALIII…EQNGLFTKED (186 aa)). Helical transmembrane passes span 7-27 (GGLL…SAVV), 71-91 (LITI…ILFL), 101-121 (AISS…LCEI), and 135-155 (LVYF…ITKL). CBS domains lie at 210 to 270 (MIKW…NEPF) and 275 to 335 (LLYP…EHDE).

Belongs to the UPF0053 family.

The protein localises to the cell membrane. In Mycoplasma pneumoniae (strain ATCC 29342 / M129 / Subtype 1) (Mycoplasmoides pneumoniae), this protein is UPF0053 protein MG146 homolog.